The sequence spans 95 residues: Bacterial microcompartment shell protein EutM (95 aa).

The region spanning 6–90 is the BMC domain; it reads ALGMIETKGL…PHFEVDAILP (85 aa).

The protein belongs to the bacterial microcompartments protein family. As to quaternary structure, homohexamer; has a positively charged pore 9 Angstroms in diameter. The hexamers pack into a two-dimensional array. May interact with EutQ.

It localises to the bacterial microcompartment. It functions in the pathway amine and polyamine degradation; ethanolamine degradation. In terms of biological role, a component of the bacterial microcompartment (BMC) shell dedicated to ethanolamine degradation. Each homohexamer has a central pore with an opening of up to 9.0 Angstroms. Expression of the eut operon may allow this bacteria to use ethanolamine as a carbon, nitrogen and energy source. The pore probably allows metabolite passage into and out of the BMC. This chain is Bacterial microcompartment shell protein EutM, found in Clostridioides difficile (strain 630) (Peptoclostridium difficile).